The chain runs to 57 residues: Large ribosomal subunit protein bL32 (57 aa).

It belongs to the bacterial ribosomal protein bL32 family.

This chain is Large ribosomal subunit protein bL32, found in Geobacillus kaustophilus (strain HTA426).